A 588-amino-acid chain; its full sequence is ATP-dependent lipid A-core flippase (588 aa).

Transmembrane regions (helical) follow at residues 23–43 (FWPV…IDAG), 56–76 (FITI…IGIT), 141–161 (DALT…TVMM), 162–182 (VICW…GIIV), 257–277 (LVIA…STVI), and 278–298 (TISA…IKPM). The ABC transmembrane type-1 domain maps to 28-310 (LLGVLANILY…LTTLNATIQR (283 aa)). The ABC transporter domain occupies 342 to 576 (IEFKHVYHAY…DGHYAQLYKV (235 aa)). 375–382 (GHSGSGKT) contacts ATP.

The protein belongs to the ABC transporter superfamily. Lipid exporter (TC 3.A.1.106) family. As to quaternary structure, homodimer.

It localises to the cell inner membrane. It catalyses the reaction ATP + H2O + lipid A-core oligosaccharideSide 1 = ADP + phosphate + lipid A-core oligosaccharideSide 2.. Its function is as follows. Involved in lipopolysaccharide (LPS) biosynthesis. Translocates lipid A-core from the inner to the outer leaflet of the inner membrane. Transmembrane domains (TMD) form a pore in the inner membrane and the ATP-binding domain (NBD) is responsible for energy generation. This chain is ATP-dependent lipid A-core flippase, found in Legionella pneumophila (strain Lens).